The sequence spans 410 residues: Dihydrolipoyllysine-residue acetyltransferase component of pyruvate dehydrogenase complex (410 aa).

A Lipoyl-binding domain is found at 1-69 (MPDIGTDLVE…TTGSLIAILN (69 aa)). The residue at position 35 (Lys-35) is an N6-lipoyllysine. A disordered region spans residues 81–100 (SSSYSFKNSKNTSTNSNLGN). The Peripheral subunit-binding (PSBD) domain occupies 113–150 (HATPTVRRLARKFDIKLENITGTGRKGRILKEDVISYK). Residue His-383 is part of the active site.

This sequence belongs to the 2-oxoacid dehydrogenase family. In terms of assembly, forms a 24-polypeptide structural core with octahedral symmetry. (R)-lipoate is required as a cofactor.

The catalysed reaction is N(6)-[(R)-dihydrolipoyl]-L-lysyl-[protein] + acetyl-CoA = N(6)-[(R)-S(8)-acetyldihydrolipoyl]-L-lysyl-[protein] + CoA. In terms of biological role, the pyruvate dehydrogenase complex catalyzes the overall conversion of pyruvate to acetyl-CoA and CO(2). It contains multiple copies of three enzymatic components: pyruvate dehydrogenase (E1), dihydrolipoamide acetyltransferase (E2) and lipoamide dehydrogenase (E3). The protein is Dihydrolipoyllysine-residue acetyltransferase component of pyruvate dehydrogenase complex (aceF) of Buchnera aphidicola subsp. Baizongia pistaciae (strain Bp).